We begin with the raw amino-acid sequence, 59 residues long: Amyloid-beta precursor protein (59 aa).

The Extracellular segment spans residues 1-34 (ISEVKMDAEFRHDSGYEVHHQKLVFFAEDVGSNK). Residues 35 to 58 (GAIIGLMVGGVVIATVIVITLVML) traverse the membrane as a helical segment. Residue K59 is a topological domain, cytoplasmic.

The protein belongs to the APP family. In terms of assembly, binds, via its C-terminus, to the PID domain of several cytoplasmic proteins, including APBB family members, the APBA family, MAPK8IP1, SHC1 and NUMB and DAB1. Binding to DAB1 inhibits its serine phosphorylation. Interacts (via NPXY motif) with DAB2 (via PID domain); the interaction is impaired by tyrosine phosphorylation of the NPXY motif. Also interacts with GPCR-like protein BPP, APPBP1, IB1, KNS2 (via its TPR domains), APPBP2 (via BaSS) and DDB1. In vitro, it binds MAPT via the MT-binding domains. Associates with microtubules in the presence of ATP and in a kinesin-dependent manner. Interacts, through a C-terminal domain, with GNAO1. Interacts with CPEB1, ANKS1B and AGER. Interacts with ITM2B. Interacts with ITM2C. Interacts with IDE. Can form homodimers; dimerization is enhanced in the presence of Cu(2+) ions. Can form homodimers; this is promoted by heparin binding. Interacts with SORL1 (via N-terminal ectodomain); this interaction retains APP in the trans-Golgi network and reduces processing into soluble APP-alpha and amyloid-beta peptides. Interacts with PLD3. Interacts with VDAC1. Interacts with NSG1; could regulate APP processing. Amyloid-beta protein 42 interacts with FPR2. Interacts with LRRK2. Interacts (via cytoplasmic domain) with KIF5B. Interacts (via C-terminus) with APBB2/FE65L1 (via C-terminus). Interacts (via intracellular domain) with APBB3. In terms of processing, proteolytically processed under normal cellular conditions. Cleavage either by alpha-secretase, beta-secretase or theta-secretase leads to generation and extracellular release of soluble APP peptides, S-APP-alpha and S-APP-beta, and the retention of corresponding membrane-anchored C-terminal fragments, C80, C83 and C99. Subsequent processing of C80 and C83 by gamma-secretase yields P3 peptides. This is the major secretory pathway and is non-amyloidogenic. Alternatively, presenilin/nicastrin-mediated gamma-secretase processing of C99 releases the amyloid-beta proteins, amyloid-beta protein 40 and amyloid-beta protein 42, major components of amyloid plaques, and the cytotoxic C-terminal fragments, gamma-CTF(50), gamma-CTF(57) and gamma-CTF(59). PSEN1 cleavage is more efficient with C83 than with C99 as substrate (in vitro). Amyloid-beta protein 40 and Amyloid-beta protein 42 are cleaved by ACE. Many other minor amyloid-beta peptides, amyloid-beta 1-X peptides, are found in cerebral spinal fluid (CSF) including the amyloid-beta X-15 peptides, produced from the cleavage by alpha-secretase.

The protein resides in the cell membrane. Its subcellular location is the membrane. The protein localises to the perikaryon. It localises to the cell projection. It is found in the growth cone. The protein resides in the clathrin-coated pit. Its subcellular location is the early endosome. The protein localises to the cytoplasmic vesicle. It localises to the secreted. It is found in the cell surface. The protein resides in the nucleus. Its subcellular location is the cytoplasm. In terms of biological role, functions as a cell surface receptor and performs physiological functions on the surface of neurons relevant to neurite growth, neuronal adhesion and axonogenesis. Interaction between APP molecules on neighboring cells promotes synaptogenesis. Involved in cell mobility and transcription regulation through protein-protein interactions. Can promote transcription activation through binding to APBB1-KAT5 and inhibit Notch signaling through interaction with Numb. Couples to apoptosis-inducing pathways such as those mediated by G(o) and JIP. Inhibits G(o)-alpha ATPase activity. Acts as a kinesin I membrane receptor, mediating the axonal transport of beta-secretase and presenilin 1. By acting as a kinesin I membrane receptor, plays a role in axonal anterograde transport of cargo towards synapses in axons. May be involved in copper homeostasis/oxidative stress through copper ion reduction. In vitro, copper-metallated APP induces neuronal death directly or is potentiated through Cu(2+)-mediated low-density lipoprotein oxidation. Can regulate neurite outgrowth through binding to components of the extracellular matrix such as heparin and collagen I and IV. Induces a AGER-dependent pathway that involves activation of p38 MAPK, resulting in internalization of amyloid-beta peptide and mitochondrial dysfunction in cultured cortical neurons. Provides Cu(2+) ions for GPC1 which are required for release of nitric oxide (NO) and subsequent degradation of the heparan sulfate chains on GPC1. The sequence is that of Amyloid-beta precursor protein (APP) from Bos taurus (Bovine).